Reading from the N-terminus, the 25-residue chain is Alpha-lytic protease (25 aa).

It belongs to the peptidase S1 family.

It carries out the reaction Preferential cleavage: Ala-|-Xaa, Val-|-Xaa in bacterial cell walls, elastin and other proteins.. The protein is Alpha-lytic protease of Achromobacter lyticus.